A 281-amino-acid polypeptide reads, in one-letter code: Small ribosomal subunit protein uS2 (281 aa).

The segment at 225–281 is disordered; that stretch reads LMERKAEKPEEEETEEAAPRRERRARSGARRSRQNENEATAEAATEVAEAPEAEEAE. Residues 245–256 show a composition bias toward basic residues; it reads RERRARSGARRS. Over residues 262–272 the composition is skewed to low complexity; the sequence is EATAEAATEVA.

This sequence belongs to the universal ribosomal protein uS2 family.

The protein is Small ribosomal subunit protein uS2 of Porphyromonas gingivalis (strain ATCC 33277 / DSM 20709 / CIP 103683 / JCM 12257 / NCTC 11834 / 2561).